Here is a 596-residue protein sequence, read N- to C-terminus: ATP-binding protein Uup (596 aa).

ABC transporter domains follow at residues 1 to 222 and 290 to 516; these read MSLI…RIEK and FKLD…SKIN. ATP contacts are provided by residues 36 to 43 and 322 to 329; these read GKNGAGKS and GDNGCGKS. The segment at 519-596 is C-terminal domain (CTD), binds DNA; it reads IKIKNNFKKE…LEKNIINTKI (78 aa).

The protein belongs to the ABC transporter superfamily. ABCF family. Uup subfamily.

It is found in the cytoplasm. The catalysed reaction is ATP + H2O = ADP + phosphate + H(+). Probably plays a role in ribosome assembly or function. May be involved in resolution of branched DNA intermediates that result from template switching in postreplication gaps. Binds DNA and has ATPase activity. The polypeptide is ATP-binding protein Uup (Buchnera aphidicola subsp. Acyrthosiphon pisum (strain APS) (Acyrthosiphon pisum symbiotic bacterium)).